The following is a 203-amino-acid chain: Interferon type B (203 aa).

An N-terminal signal peptide occupies residues 1–27 (MTANHQSPGMHSILLLLLLPALTTTFS). 2 disulfides stabilise this stretch: cysteine 28-cysteine 125 and cysteine 57-cysteine 164. Asparagine 37 and asparagine 160 each carry an N-linked (GlcNAc...) asparagine glycan.

This sequence belongs to the alpha/beta interferon family.

The protein localises to the secreted. Has antiviral activities. The chain is Interferon type B (IFNB) from Gallus gallus (Chicken).